The following is a 594-amino-acid chain: Type I restriction enzyme EcoEI specificity subunit (594 aa).

This sequence belongs to the type-I restriction system S methylase family. As to quaternary structure, the type I restriction/modification system is composed of three polypeptides R, M and S; the restriction enzyme has stoichiometry R(2)M(2)S(1) while the methyltransferase is M(2)S(1).

Its function is as follows. The specificity (S) subunit of a type I restriction enzyme; this subunit dictates DNA sequence specificity. The M and S subunits together form a methyltransferase (MTase) that methylates two adenine residues of the sequence 5'-GAGN(7)ATGC-3'. In the presence of the R subunit the complex can also act as an endonuclease, binding to the same target sequence but cutting the DNA some distance from this site. Whether the DNA is cut or modified depends on the methylation state of the target sequence. When the target site is unmodified, the DNA is cut. When the target site is hemimethylated, the complex acts as a maintenance MTase modifying the DNA so that both strands become methylated. After locating a non-methylated recognition site, the enzyme complex serves as a molecular motor that translocates DNA in an ATP-dependent manner until a collision occurs that triggers cleavage. This chain is Type I restriction enzyme EcoEI specificity subunit, found in Escherichia coli.